Reading from the N-terminus, the 392-residue chain is Tryptophan 2,3-dioxygenase (392 aa).

Substrate-binding positions include 57-61 and Arg128; that span reads FIVTH. His313 contacts heme. Substrate is bound at residue Thr328.

This sequence belongs to the tryptophan 2,3-dioxygenase family. In terms of assembly, homotetramer. Dimer of dimers. Heme is required as a cofactor.

It carries out the reaction L-tryptophan + O2 = N-formyl-L-kynurenine. It participates in amino-acid degradation; L-tryptophan degradation via kynurenine pathway; L-kynurenine from L-tryptophan: step 1/2. The protein operates within pigment biosynthesis; ommochrome biosynthesis. Heme-dependent dioxygenase that catalyzes the oxidative cleavage of the L-tryptophan (L-Trp) pyrrole ring and converts L-tryptophan to N-formyl-L-kynurenine. Catalyzes the oxidative cleavage of the indole moiety. This is Tryptophan 2,3-dioxygenase from Anopheles gambiae (African malaria mosquito).